The following is a 170-amino-acid chain: Non-structural protein 5 (170 aa).

Disordered stretches follow at residues 1–67 (MAEA…KREP) and 83–106 (SEDE…MKRK). Residues 17–38 (TMSDRRTREDTKQKKIEEKSDI) are compositionally biased toward basic and acidic residues. Residues 45 to 57 (SVYSQESSRSNYS) show a composition bias toward polar residues.

Belongs to the rotavirus NSP5 family. As to quaternary structure, homodimer. Interacts with VP1. Interacts with VP2. Interacts with NSP2 and NSP6. O-glycosylated.

It localises to the host cytoplasm. Its function is as follows. Plays an essential role in the viral genome replication. Participates, together with NSP2, in the formation of viral factories (viroplasms) which are large inclusions in the host cytoplasm where replication intermediates are assembled and viral RNA replication takes place. Orchestrates the recruitment of viroplasmic proteins such as capsid proteins to these factories. The polypeptide is Non-structural protein 5 (Rotavirus B (isolate RVB/Human/China/ADRV/1982) (RV-B)).